The primary structure comprises 469 residues: MAGAAAAVASGISIRPVAAPKISRAPRSRSVVRAAVSIDEKAYTVQKSEEIFNAAKELMPGGVNSPVRAFKSVGGQPIVFDSVKGSHMWDVDGNEYIDYVGSWGPAIIGHADDKVNAALIETLKKGTSFGAPCALENVLAQMVISAVPSIEMVRFVNSGTEACMGALRLVRAFTGREKILKFEGCYHGHADSFLVKAGSGVATLGLPDSPGVPKGATVGTLTAPYNDADAVKKLFEDNKGEIAAVFLEPVVGNAGFIPPQPAFLNALREVTKQDGALLVFDEVMTGFRLAYGGAQEYFGITPDVTTLGKIIGGGLPVGAYGGRKDIMEMVAPAGPMYQAGTLSGNPLAMTAGIHTLKRLMEPGTYEYLDKVTGELVRGILDVGAKTGHEMCGGHIRGMFGFFFAGGPVHNFDDAKKSDTAKFGRFHRGMLGEGVYLAPSQFEAGFTSLAHTTQDIEKTVEAAEKVLRWI.

The transit peptide at Met-1–Ala-34 directs the protein to the chloroplast. Position 309 is an N6-(pyridoxal phosphate)lysine (Lys-309).

It belongs to the class-III pyridoxal-phosphate-dependent aminotransferase family. HemL subfamily. In terms of assembly, homodimer. It depends on pyridoxal 5'-phosphate as a cofactor.

Its subcellular location is the plastid. It localises to the chloroplast. The enzyme catalyses (S)-4-amino-5-oxopentanoate = 5-aminolevulinate. It participates in porphyrin-containing compound metabolism; protoporphyrin-IX biosynthesis; 5-aminolevulinate from L-glutamyl-tRNA(Glu): step 2/2. Its pathway is porphyrin-containing compound metabolism; chlorophyll biosynthesis. This chain is Glutamate-1-semialdehyde 2,1-aminomutase, chloroplastic (GSA), found in Hordeum vulgare (Barley).